The sequence spans 164 residues: Lipoprotein signal peptidase (164 aa).

3 consecutive transmembrane segments (helical) span residues 12 to 32, 70 to 90, and 102 to 122; these read WLWL…LILQ, WFFA…MYRS, and ALII…GFVV. Active-site residues include Asp-123 and Asp-141. Residues 137–157 traverse the membrane as a helical segment; it reads FNLADTAICVGAALIVLEGFL.

The protein belongs to the peptidase A8 family.

It localises to the cell inner membrane. The catalysed reaction is Release of signal peptides from bacterial membrane prolipoproteins. Hydrolyzes -Xaa-Yaa-Zaa-|-(S,diacylglyceryl)Cys-, in which Xaa is hydrophobic (preferably Leu), and Yaa (Ala or Ser) and Zaa (Gly or Ala) have small, neutral side chains.. Its pathway is protein modification; lipoprotein biosynthesis (signal peptide cleavage). This protein specifically catalyzes the removal of signal peptides from prolipoproteins. The sequence is that of Lipoprotein signal peptidase from Escherichia coli O157:H7.